The chain runs to 299 residues: ATP phosphoribosyltransferase (299 aa).

This sequence belongs to the ATP phosphoribosyltransferase family. Long subfamily. As to quaternary structure, equilibrium between an active dimeric form, an inactive hexameric form and higher aggregates. Interconversion between the various forms is largely reversible and is influenced by the natural substrates and inhibitors of the enzyme. The cofactor is Mg(2+).

The protein localises to the cytoplasm. It carries out the reaction 1-(5-phospho-beta-D-ribosyl)-ATP + diphosphate = 5-phospho-alpha-D-ribose 1-diphosphate + ATP. Its pathway is amino-acid biosynthesis; L-histidine biosynthesis; L-histidine from 5-phospho-alpha-D-ribose 1-diphosphate: step 1/9. Feedback inhibited by histidine. Catalyzes the condensation of ATP and 5-phosphoribose 1-diphosphate to form N'-(5'-phosphoribosyl)-ATP (PR-ATP). Has a crucial role in the pathway because the rate of histidine biosynthesis seems to be controlled primarily by regulation of HisG enzymatic activity. This chain is ATP phosphoribosyltransferase, found in Buchnera aphidicola subsp. Baizongia pistaciae (strain Bp).